Consider the following 347-residue polypeptide: NAD-dependent alcohol dehydrogenase (347 aa).

Lys-11 carries the post-translational modification N6-methyllysine; partial. Positions 38, 68, 98, 101, 104, 112, and 154 each coordinate Zn(2+). The residue at position 213 (Lys-213) is an N6-methyllysine; partial.

This sequence belongs to the zinc-containing alcohol dehydrogenase family. As to quaternary structure, homodimer and homotetramer. It depends on Zn(2+) as a cofactor.

It catalyses the reaction a primary alcohol + NAD(+) = an aldehyde + NADH + H(+). The catalysed reaction is a secondary alcohol + NAD(+) = a ketone + NADH + H(+). This is NAD-dependent alcohol dehydrogenase (adh) from Saccharolobus solfataricus (strain ATCC 35092 / DSM 1617 / JCM 11322 / P2) (Sulfolobus solfataricus).